A 60-amino-acid chain; its full sequence is Large ribosomal subunit protein uL30 (60 aa).

This sequence belongs to the universal ribosomal protein uL30 family. As to quaternary structure, part of the 50S ribosomal subunit.

The protein is Large ribosomal subunit protein uL30 of Paracidovorax citrulli (strain AAC00-1) (Acidovorax citrulli).